We begin with the raw amino-acid sequence, 81 residues long: Cytochrome c oxidase subunit NDUFA4 (81 aa).

Topologically, residues 1–14 (MLRQIIGQAKKHPS) are mitochondrial matrix. Lysine 10 carries the N6-acetyllysine modification. A helical membrane pass occupies residues 15–37 (LIPLFVFIGTGATGATLYLLRLA). The Mitochondrial intermembrane segment spans residues 38 to 81 (LFNPDVCWDRNNPEPWNKLGPNDQYKFYSVNVDYSKLKKERPDF). Serine 66 is modified (phosphoserine).

Belongs to the complex IV NDUFA4 subunit family. Component of the cytochrome c oxidase (complex IV, CIV), a multisubunit enzyme composed of 14 subunits. The complex is composed of a catalytic core of 3 subunits MT-CO1, MT-CO2 and MT-CO3, encoded in the mitochondrial DNA, and 11 supernumerary subunits COX4I1 (or COX4I2), COX5A, COX5B, COX6A1 (or COX6A2), COX6B1 (or COX6B2), COX6C, COX7A2 (or COX7A1), COX7B, COX7C, COX8A and NDUFA4, which are encoded in the nuclear genome. The complex exists as a monomer or a dimer and forms supercomplexes (SCs) in the inner mitochondrial membrane with NADH-ubiquinone oxidoreductase (complex I, CI) and ubiquinol-cytochrome c oxidoreductase (cytochrome b-c1 complex, complex III, CIII), resulting in different assemblies (supercomplex SCI(1)III(2)IV(1) and megacomplex MCI(2)III(2)IV(2)). Interacts with RAB5IF. Interacts with FLVCR2; this interaction occurs in the absence of heme and is disrupted upon heme binding.

The protein localises to the mitochondrion inner membrane. Functionally, component of the cytochrome c oxidase, the last enzyme in the mitochondrial electron transport chain which drives oxidative phosphorylation. The respiratory chain contains 3 multisubunit complexes succinate dehydrogenase (complex II, CII), ubiquinol-cytochrome c oxidoreductase (cytochrome b-c1 complex, complex III, CIII) and cytochrome c oxidase (complex IV, CIV), that cooperate to transfer electrons derived from NADH and succinate to molecular oxygen, creating an electrochemical gradient over the inner membrane that drives transmembrane transport and the ATP synthase. Cytochrome c oxidase is the component of the respiratory chain that catalyzes the reduction of oxygen to water. Electrons originating from reduced cytochrome c in the intermembrane space (IMS) are transferred via the dinuclear copper A center (CU(A)) of subunit 2 and heme A of subunit 1 to the active site in subunit 1, a binuclear center (BNC) formed by heme A3 and copper B (CU(B)). The BNC reduces molecular oxygen to 2 water molecules unsing 4 electrons from cytochrome c in the IMS and 4 protons from the mitochondrial matrix. NDUFA4 is required for complex IV maintenance. In Homo sapiens (Human), this protein is Cytochrome c oxidase subunit NDUFA4 (NDUFA4).